The primary structure comprises 158 residues: Crossover junction endodeoxyribonuclease RuvC (158 aa).

Residues Asp7, Glu66, and Asp139 contribute to the active site. Residues Asp7, Glu66, and Asp139 each contribute to the Mg(2+) site.

Belongs to the RuvC family. Homodimer which binds Holliday junction (HJ) DNA. The HJ becomes 2-fold symmetrical on binding to RuvC with unstacked arms; it has a different conformation from HJ DNA in complex with RuvA. In the full resolvosome a probable DNA-RuvA(4)-RuvB(12)-RuvC(2) complex forms which resolves the HJ. Requires Mg(2+) as cofactor.

Its subcellular location is the cytoplasm. It catalyses the reaction Endonucleolytic cleavage at a junction such as a reciprocal single-stranded crossover between two homologous DNA duplexes (Holliday junction).. The RuvA-RuvB-RuvC complex processes Holliday junction (HJ) DNA during genetic recombination and DNA repair. Endonuclease that resolves HJ intermediates. Cleaves cruciform DNA by making single-stranded nicks across the HJ at symmetrical positions within the homologous arms, yielding a 5'-phosphate and a 3'-hydroxyl group; requires a central core of homology in the junction. The consensus cleavage sequence is 5'-(A/T)TT(C/G)-3'. Cleavage occurs on the 3'-side of the TT dinucleotide at the point of strand exchange. HJ branch migration catalyzed by RuvA-RuvB allows RuvC to scan DNA until it finds its consensus sequence, where it cleaves and resolves the cruciform DNA. This is Crossover junction endodeoxyribonuclease RuvC from Campylobacter jejuni subsp. jejuni serotype O:6 (strain 81116 / NCTC 11828).